A 337-amino-acid polypeptide reads, in one-letter code: MRVLGIETSCDETGIAIFDDQKGILSHQLYSQVKLHADYGGVVPELASRDHVRKTIPLIQAALQEAGLDKDGIDGIAYTAGPGLVGAILVGATIGRSLAMAWNKPAIAVHHMEGHLLAPMLEERAPEFPFVALLVSGGHSMLVRVDGIGSYQLLGESIDDAAGEAFDKTAKLMGLDYPGGPLLSRLAEKGTTGRFHFPRPMTDRPGLDMSFSGLKTFAANTIAANGDDEQTRADIARAFEDAVVDTLAIKCRRALKETGLKRLVVAGGVSANRHLRAQLAELMESLKGKVFYPRTEYCTDNGAMIAYAGMQRLKAGVFEPLAVKAVPRWPLDTLDPV.

The Fe cation site is built by His-111 and His-115. Residues 134–138, Asp-167, Gly-180, and Asn-272 contribute to the substrate site; that span reads LVSGG. Position 300 (Asp-300) interacts with Fe cation.

It belongs to the KAE1 / TsaD family. Fe(2+) is required as a cofactor.

It localises to the cytoplasm. It catalyses the reaction L-threonylcarbamoyladenylate + adenosine(37) in tRNA = N(6)-L-threonylcarbamoyladenosine(37) in tRNA + AMP + H(+). Its function is as follows. Required for the formation of a threonylcarbamoyl group on adenosine at position 37 (t(6)A37) in tRNAs that read codons beginning with adenine. Is involved in the transfer of the threonylcarbamoyl moiety of threonylcarbamoyl-AMP (TC-AMP) to the N6 group of A37, together with TsaE and TsaB. TsaD likely plays a direct catalytic role in this reaction. This is tRNA N6-adenosine threonylcarbamoyltransferase from Aeromonas salmonicida (strain A449).